A 461-amino-acid chain; its full sequence is Lysosomal proton-coupled steroid conjugate and bile acid symporter SLC46A3 (461 aa).

An N-terminal signal peptide occupies residues 1 to 25 (MKISFIEPAILLYAFAMTLTIPLTA). Over 26–70 (QYVYRRIWEETGNYTFTSSSNVSECEQNKSSSTFAFQEEVQKKAS) the chain is Extracellular. 3 N-linked (GlcNAc...) asparagine glycosylation sites follow: Asn38, Asn46, and Asn53. The chain crosses the membrane as a helical span at residues 71 to 91 (LFSLQVEISGLIPGLVSTFML). Over 92–103 (LSSSDNHGRKLP) the chain is Cytoplasmic. The helical transmembrane segment at 104–124 (MVLSSLGSLGTNLWLCAMSYF) threads the bilayer. The Extracellular portion of the chain corresponds to 125–135 (DLPLQLLVAST). Residues 136–156 (FIGALFGNYTTFWGACFAYIV) form a helical membrane-spanning segment. Over 157–170 (DQEKEYKHRIIRIA) the chain is Cytoplasmic. A helical transmembrane segment spans residues 171 to 191 (VLDFMLGVVTGLTGLSSGYFI). Residues 192 to 197 (RELGFA) are Extracellular-facing. A helical transmembrane segment spans residues 198–218 (WSYFIIAVVVLVNLAYILFFL). At 219 to 260 (SDPIKESSSQIVTMSCSESLKDLFYRTYMLFKNGSCKRRSLL) the chain is on the cytoplasmic side. The helical transmembrane segment at 261–281 (CLLIFTLVVYFFVVFGITPVF) threads the bilayer. The Extracellular portion of the chain corresponds to 282-301 (TLYELGPPLCWNEVYIGYGS). The helical transmembrane segment at 302–322 (ALGSLSFLSSFLGIWLFSYCL) threads the bilayer. At 323–324 (KD) the chain is on the cytoplasmic side. The chain crosses the membrane as a helical span at residues 325 to 345 (IHIAYVGIFTTMVGMMLTAFT). At 346 to 347 (RT) the chain is on the extracellular side. The helical transmembrane segment at 348–368 (TLMMFLVRISFFFTIMPLSIL) threads the bilayer. Residues 369–381 (RSMLSKVVHSTEQ) are Cytoplasmic-facing. The helical transmembrane segment at 382–402 (GVLFACIAFLETLGGVTSTSA) threads the bilayer. At 403 to 415 (YNGIYSATVAWYP) the chain is on the extracellular side. A helical transmembrane segment spans residues 416 to 436 (GFVFLLSAGLLVLPAVSLCMV). The Cytoplasmic portion of the chain corresponds to 437 to 461 (KCIGWEEGSYTLLIHDEPSEHTSDS). The short motif at 446-449 (YTLL) is the Tyrosine-based lysosomal-sorting motif element.

It belongs to the major facilitator superfamily. SLC46A family.

It is found in the lysosome membrane. It carries out the reaction estrone 3-sulfate(out) + n H(+)(out) = estrone 3-sulfate(in) + n H(+)(in). The enzyme catalyses 25-hydroxyvitamin D3 sulfate(out) + n H(+)(out) = 25-hydroxyvitamin D3 sulfate(in) + n H(+)(in). The catalysed reaction is cholate(out) + n H(+)(out) = cholate(in) + n H(+)(in). It catalyses the reaction glycocholate(out) + n H(+)(out) = glycocholate(in) + n H(+)(in). It carries out the reaction taurocholate(out) + n H(+)(out) = taurocholate(in) + n H(+)(in). The enzyme catalyses dehydroepiandrosterone 3-sulfate(out) + n H(+)(out) = dehydroepiandrosterone 3-sulfate(in) + n H(+)(in). The catalysed reaction is N-acetyl-D-muramoyl-L-alanyl-D-isoglutamine(out) + n H(+)(out) = N-acetyl-D-muramoyl-L-alanyl-D-isoglutamine(in) + n H(+)(in). It catalyses the reaction 2',3'-cGAMP(out) + n H(+)(out) = 2',3'-cGAMP(in) + n H(+)(in). Lysosomal proton-coupled steroid conjugate and bile acid transporter. Preferentially recognizes lipophilic steroid conjugates or bile acis as endogenous substrates and seems to mediate escape from lysosomes to the cytoplasm. Modulates hepatic cytosolic copper homeostasis, maybe acting as a lysosomal copper transporter and sequestering copper ions in the lysosome. Delivers pathogen-associated molecular patterns to cytosolic pattern recognition receptors as part of the innate immune response to microbes. Selectively transports bacterial muramyl dipeptide (MDP) into the cytosol for recognition by NOD2, triggering inflammatory responses. Likely acts as a redundant importer of cyclic GMP-AMP dinucleotides (cGAMPs) in monocyte and macrophage cell lineages. The transport mechanism, its electrogenicity and stoichiometry remain to be elucidated. The polypeptide is Lysosomal proton-coupled steroid conjugate and bile acid symporter SLC46A3 (Slc46a3) (Rattus norvegicus (Rat)).